Reading from the N-terminus, the 671-residue chain is Arginine--tRNA ligase (671 aa).

Positions 124 to 134 (PNVAKPMHVGH) match the 'HIGH' region motif. Positions 223–254 (KSDAKTAKEVSDQSESDENLKPKDKKKLRKNA) are disordered. A compositionally biased stretch (basic and acidic residues) spans 224-233 (SDAKTAKEVS).

Belongs to the class-I aminoacyl-tRNA synthetase family. In terms of assembly, monomer.

Its subcellular location is the cytoplasm. It catalyses the reaction tRNA(Arg) + L-arginine + ATP = L-arginyl-tRNA(Arg) + AMP + diphosphate. In Rhodopirellula baltica (strain DSM 10527 / NCIMB 13988 / SH1), this protein is Arginine--tRNA ligase.